We begin with the raw amino-acid sequence, 214 residues long: Adenylate kinase (214 aa).

10-15 (GAGKGT) lines the ATP pocket. The tract at residues 30–59 (STGDMFRDHKARGTEIGKQVQAIMDAGGLV) is NMP. AMP is bound by residues threonine 31, arginine 36, 57–59 (GLV), 85–88 (GYPR), and glutamine 92. An LID region spans residues 126-163 (GRRSCPRCGAVYHVSQNPPHRAGFCDRDDAALVQREDD). Residue arginine 127 participates in ATP binding. Zn(2+) contacts are provided by cysteine 130 and cysteine 133. An ATP-binding site is contributed by 136 to 137 (VY). Residues cysteine 150 and aspartate 153 each coordinate Zn(2+). Residues arginine 160 and arginine 171 each contribute to the AMP site. Glycine 199 provides a ligand contact to ATP.

Belongs to the adenylate kinase family. Monomer.

It is found in the cytoplasm. It catalyses the reaction AMP + ATP = 2 ADP. It participates in purine metabolism; AMP biosynthesis via salvage pathway; AMP from ADP: step 1/1. Its function is as follows. Catalyzes the reversible transfer of the terminal phosphate group between ATP and AMP. Plays an important role in cellular energy homeostasis and in adenine nucleotide metabolism. This is Adenylate kinase from Anaeromyxobacter dehalogenans (strain 2CP-1 / ATCC BAA-258).